A 432-amino-acid polypeptide reads, in one-letter code: Ribosome biogenesis protein WDR12 homolog (432 aa).

The tract at residues 13 to 97 (LQIRLVALNK…ESVIEVVYFQ (85 aa)) is ubiquitin-like (UBL) domain. 7 WD repeats span residues 109 to 146 (LHSD…YAIF), 148 to 190 (GHES…KSVE), 197 to 236 (GHTQ…KDDD), 265 to 303 (GHTD…NKSD), 305 to 345 (NVNK…DQTV), 352 to 392 (SHKN…APLY), and 396 to 432 (GHED…AQRS).

Belongs to the WD repeat WDR12/YTM1 family.

Its subcellular location is the nucleus. It localises to the nucleolus. It is found in the nucleoplasm. Functionally, required for maturation of ribosomal RNAs and formation of the large ribosomal subunit. This is Ribosome biogenesis protein WDR12 homolog from Trichoplax adhaerens (Trichoplax reptans).